A 1001-amino-acid chain; its full sequence is RNA-binding protein 12B (1001 aa).

Residues S98, S101, and S112 each carry the phosphoserine modification. Residue K114 forms a Glycyl lysine isopeptide (Lys-Gly) (interchain with G-Cter in SUMO2) linkage. Positions 119-128 are enriched in polar residues; that stretch reads NSGYGSSINQ. The interval 119-147 is disordered; that stretch reads NSGYGSSINQDAGFHTNGTGHGNLRPRKT. K151 is covalently cross-linked (Glycyl lysine isopeptide (Lys-Gly) (interchain with G-Cter in SUMO2)). The RRM 1 domain maps to 155–230; the sequence is PYLFLRGLPY…RFIEVMQGSE (76 aa). A compositionally biased stretch (basic and acidic residues) spans 247 to 262; that stretch reads LRRSEEHSPPRGINDR. The interval 247–278 is disordered; it reads LRRSEEHSPPRGINDRHFRKRSHSKSPRRTRS. Residues S250 and S254 each carry the phosphoserine modification. The span at 263–278 shows a compositional bias: basic residues; it reads HFRKRSHSKSPRRTRS. T276 carries the phosphothreonine modification. A phosphoserine mark is found at S278, S280, S292, and S294. In terms of domain architecture, RRM 2 spans 284-360; the sequence is FYVHLKNLSL…RPVHIDPISR (77 aa). The residue at position 319 (K319) is an N6-acetyllysine. K335 is covalently cross-linked (Glycyl lysine isopeptide (Lys-Gly) (interchain with G-Cter in SUMO2)). S377 carries the post-translational modification Phosphoserine. The 78-residue stretch at 400–477 folds into the RRM 3 domain; the sequence is LCIYIRNFPF…TEVLLRLISE (78 aa). Residues K514 and K541 each participate in a glycyl lysine isopeptide (Lys-Gly) (interchain with G-Cter in SUMO2) cross-link. The interval 544 to 587 is disordered; it reads QRDFRQPDRHPPEDFRHSSEDFRFPPEDFRHSPEDFRRPREEDF. S575, S591, and S638 each carry phosphoserine. Residues 631–881 show a composition bias toward basic and acidic residues; that stretch reads LEEDFRRSPT…FRSPPDDFRS (251 aa). Positions 631 to 882 are disordered; that stretch reads LEEDFRRSPT…RSPPDDFRSH (252 aa). Phosphothreonine is present on T640. Phosphoserine occurs at positions 710 and 718. K895 is covalently cross-linked (Glycyl lysine isopeptide (Lys-Gly) (interchain with G-Cter in SUMO2)). An RRM 4 domain is found at 925 to 1001; that stretch reads TPIKIMNLPF…GPRKVKLTLL (77 aa).

This chain is RNA-binding protein 12B (RBM12B), found in Homo sapiens (Human).